We begin with the raw amino-acid sequence, 316 residues long: 4-diphosphocytidyl-2-C-methyl-D-erythritol kinase (316 aa).

The active site involves lysine 14. Proline 96–serine 106 is an ATP binding site. Aspartate 138 is an active-site residue.

The protein belongs to the GHMP kinase family. IspE subfamily.

The catalysed reaction is 4-CDP-2-C-methyl-D-erythritol + ATP = 4-CDP-2-C-methyl-D-erythritol 2-phosphate + ADP + H(+). It participates in isoprenoid biosynthesis; isopentenyl diphosphate biosynthesis via DXP pathway; isopentenyl diphosphate from 1-deoxy-D-xylulose 5-phosphate: step 3/6. Functionally, catalyzes the phosphorylation of the position 2 hydroxy group of 4-diphosphocytidyl-2C-methyl-D-erythritol. This is 4-diphosphocytidyl-2-C-methyl-D-erythritol kinase from Solibacter usitatus (strain Ellin6076).